We begin with the raw amino-acid sequence, 237 residues long: Lectin alpha chain (237 aa).

Mn(2+)-binding residues include E8 and D10. Ca(2+) is bound by residues D10, Y12, N14, and D19. Residue Y12 participates in a carbohydrate binding. Positions 19 and 24 each coordinate Mn(2+). Residue 99-100 coordinates a carbohydrate; sequence LY. Residue D208 coordinates Ca(2+). R228 is an a carbohydrate binding site.

Belongs to the leguminous lectin family. Equilibrium between homodimer and homotetramer. Oligomerization is pH-dependent with homotetramers forming at pH 6.5 and above. In terms of processing, the beta and gamma chains are produced by partial proteolytic processing of the lectin alpha chain by an asparaginyl endopeptidase. Mixture of 60% alpha lectin and 40% of its beta and gamma proteolytic fragments. In terms of tissue distribution, seed.

The protein resides in the vacuole. Its subcellular location is the aleurone grain. D-mannose/D-glucose-binding lectin. Has anti-inflammatory activity in rats. Induces histamine release in mast cells from hamster and rat. Induces lymphocyte proliferation and IFNG production. Shows toxicity against the aquatic snail B.glabrata at concentrations higher than 20 ug/ml. The chain is Lectin alpha chain from Dioclea virgata.